Here is a 417-residue protein sequence, read N- to C-terminus: MDKLVIEGGVPLTGTINVSGSKNAALPILMASILAEEPLTYTNVPRLRDIHTTNKLLSILGCPAEFEGDTVSVRPCDLKPEAPYDLVKTMRASVLCLGPLLARLGEARVALPGGCAIGARPVDLHLTALEKMGARFELEEGYIIGRCRKLKGAHIYFDFPTVGGTENLLMAATLAEGETILENAAREPEVVDLARFLIACGAKIEGHGTSVIRIQGVPRLHGCEYAIMPDRIEAGTFLVAAGITGGELLLTGCPWEELDAVIVKLNAMGMHIEKTSEGVLAKRRNGGLRGTDVTTQPFPGFPTDMQAQVMSLMCLAEGTSVVQENIFENRFMHVLELVRMGADIRISGRSAVVRGVKRLTGAPVMASDLRASASLVLAGLAARGTTHVQRIYHLDRGYERIELKLNAVGARIRREAE.

22–23 (KN) provides a ligand contact to phosphoenolpyruvate. R91 contributes to the UDP-N-acetyl-alpha-D-glucosamine binding site. The active-site Proton donor is the C115. 2-(S-cysteinyl)pyruvic acid O-phosphothioketal is present on C115. UDP-N-acetyl-alpha-D-glucosamine-binding positions include 120-124 (RPVDL), D304, and I326.

It belongs to the EPSP synthase family. MurA subfamily.

The protein resides in the cytoplasm. The enzyme catalyses phosphoenolpyruvate + UDP-N-acetyl-alpha-D-glucosamine = UDP-N-acetyl-3-O-(1-carboxyvinyl)-alpha-D-glucosamine + phosphate. Its pathway is cell wall biogenesis; peptidoglycan biosynthesis. Cell wall formation. Adds enolpyruvyl to UDP-N-acetylglucosamine. The sequence is that of UDP-N-acetylglucosamine 1-carboxyvinyltransferase from Nitratidesulfovibrio vulgaris (strain DP4) (Desulfovibrio vulgaris).